A 474-amino-acid polypeptide reads, in one-letter code: L-arabinose isomerase (474 aa).

Positions 306, 331, 348, and 447 each coordinate Mn(2+).

The protein belongs to the arabinose isomerase family. Requires Mn(2+) as cofactor.

It catalyses the reaction beta-L-arabinopyranose = L-ribulose. The protein operates within carbohydrate degradation; L-arabinose degradation via L-ribulose; D-xylulose 5-phosphate from L-arabinose (bacterial route): step 1/3. Its function is as follows. Catalyzes the conversion of L-arabinose to L-ribulose. This is L-arabinose isomerase from Pediococcus pentosaceus (strain ATCC 25745 / CCUG 21536 / LMG 10740 / 183-1w).